Here is a 136-residue protein sequence, read N- to C-terminus: Large ribosomal subunit protein uL16c (136 aa).

This sequence belongs to the universal ribosomal protein uL16 family. Part of the 50S ribosomal subunit.

The protein resides in the plastid. Its subcellular location is the chloroplast. The chain is Large ribosomal subunit protein uL16c from Chlamydomonas sp. (strain WXM).